The following is a 437-amino-acid chain: Magnetosome protein MamN (437 aa).

11 helical membrane-spanning segments follow: residues 26–46 (LAVLAGAAVLVVIGTISGTYT), 53–73 (SIYFETLALIFGMAAISALLA), 95–115 (WILVMMALVTYGISLASNSLI), 136–156 (VPVIIAEIIAANLGGSSTMIG), 174–194 (FIGGMMPACLILLAVTFLFFE), 229–249 (YGLIIFFITVIGLVLAGPLKV), 252–268 (GWIAFVAGLTALALGRF), 281–301 (DILFFGGLFVMVGALTSVGIL), 320–340 (AILLMWMAAGVTIFVGGGTSA), 358–378 (AAWWALALGIMAGSCAALSGA), and 416–436 (WGLPLMGIFLVLSTVYIAVLA).

Belongs to the arsenite-antimonite (ArsB) efflux (TC 2.A.45) family.

It localises to the magnetosome membrane. Plays a role in biomineralization; might regulate pH in the magnetosome. The chain is Magnetosome protein MamN from Magnetospirillum gryphiswaldense (strain DSM 6361 / JCM 21280 / NBRC 15271 / MSR-1).